The chain runs to 290 residues: ATP synthase subunit a (290 aa).

Helical transmembrane passes span 54–74 (AVHL…ILLF), 115–135 (IAPL…LKWI), 136–156 (PVDY…KIVP), 164–184 (FGLS…VKGF), 201–221 (LVPF…LSLA), 233–253 (VVFI…NVPW), and 254–274 (AIFH…LTVV).

The protein belongs to the ATPase A chain family. In terms of assembly, F-type ATPases have 2 components, CF(1) - the catalytic core - and CF(0) - the membrane proton channel. CF(1) has five subunits: alpha(3), beta(3), gamma(1), delta(1), epsilon(1). CF(0) has three main subunits: a(1), b(2) and c(9-12). The alpha and beta chains form an alternating ring which encloses part of the gamma chain. CF(1) is attached to CF(0) by a central stalk formed by the gamma and epsilon chains, while a peripheral stalk is formed by the delta and b chains.

The protein resides in the cell inner membrane. Key component of the proton channel; it plays a direct role in the translocation of protons across the membrane. The protein is ATP synthase subunit a of Stutzerimonas stutzeri (strain A1501) (Pseudomonas stutzeri).